A 93-amino-acid polypeptide reads, in one-letter code: Small ribosomal subunit protein uS19 (93 aa).

Belongs to the universal ribosomal protein uS19 family.

Its function is as follows. Protein S19 forms a complex with S13 that binds strongly to the 16S ribosomal RNA. This is Small ribosomal subunit protein uS19 from Ehrlichia chaffeensis (strain ATCC CRL-10679 / Arkansas).